We begin with the raw amino-acid sequence, 146 residues long: Ribonuclease VapC41 (146 aa).

The PINc domain occupies 3 to 142; the sequence is LCDTNIWLAL…FTQYGGIELR (140 aa). Residues Asp5 and Asp112 each coordinate Mg(2+).

This sequence belongs to the PINc/VapC protein family. Mg(2+) is required as a cofactor.

Toxic component of a type II toxin-antitoxin (TA) system. An RNase. Its toxic effect is neutralized by coexpression with cognate antitoxin VapB41. The protein is Ribonuclease VapC41 of Mycobacterium tuberculosis (strain CDC 1551 / Oshkosh).